The primary structure comprises 49 residues: Large ribosomal subunit protein bL33C (49 aa).

The segment at 20–49 (NKNKRNNPDRLEKQKYCPRERKVTLHRETK) is disordered. The segment covering 25-49 (NNPDRLEKQKYCPRERKVTLHRETK) has biased composition (basic and acidic residues).

It belongs to the bacterial ribosomal protein bL33 family.

The chain is Large ribosomal subunit protein bL33C (rpmG3) from Enterococcus faecalis (strain ATCC 700802 / V583).